A 287-amino-acid polypeptide reads, in one-letter code: Nematocyst expressed protein 6 (287 aa).

A signal peptide spans 1–20 (MKGFIFAGVLVSALICLAEG). One can recognise a Peptidase M12A domain in the interval 53–249 (RAALRDRYLW…RQTNLMYKCN (197 aa)). Cystine bridges form between Cys95–Cys248 and Cys116–Cys139. His146 lines the Zn(2+) pocket. Glu147 is an active-site residue. The Zn(2+) site is built by His150 and His156. Residues 249–287 (NAQGDSELQPVNDEDEDKDGGDSKKKPDPKGPKPGEIEE) are disordered. Positions 268 to 287 (GGDSKKKPDPKGPKPGEIEE) are enriched in basic and acidic residues.

Zn(2+) serves as cofactor. Nematocyte and pharyngeal gland.

It is found in the secreted. The protein localises to the nematocyst. Functionally, metalloprotease. The chain is Nematocyst expressed protein 6 from Nematostella vectensis (Starlet sea anemone).